We begin with the raw amino-acid sequence, 332 residues long: Anthranilate phosphoribosyltransferase (332 aa).

5-phospho-alpha-D-ribose 1-diphosphate is bound by residues G79, 82–83, T87, 89–92, 107–115, and A119; these read GD, NIST, and KHGNYGATS. Residue G79 participates in anthranilate binding. Residue S91 participates in Mg(2+) binding. N110 lines the anthranilate pocket. Residue R165 participates in anthranilate binding. The Mg(2+) site is built by D223 and E224.

The protein belongs to the anthranilate phosphoribosyltransferase family. Homodimer. Mg(2+) is required as a cofactor.

The enzyme catalyses N-(5-phospho-beta-D-ribosyl)anthranilate + diphosphate = 5-phospho-alpha-D-ribose 1-diphosphate + anthranilate. Its pathway is amino-acid biosynthesis; L-tryptophan biosynthesis; L-tryptophan from chorismate: step 2/5. Catalyzes the transfer of the phosphoribosyl group of 5-phosphorylribose-1-pyrophosphate (PRPP) to anthranilate to yield N-(5'-phosphoribosyl)-anthranilate (PRA). The chain is Anthranilate phosphoribosyltransferase from Bacteroides thetaiotaomicron (strain ATCC 29148 / DSM 2079 / JCM 5827 / CCUG 10774 / NCTC 10582 / VPI-5482 / E50).